A 146-amino-acid chain; its full sequence is Ribosome maturation factor RimP (146 aa).

This sequence belongs to the RimP family.

It localises to the cytoplasm. In terms of biological role, required for maturation of 30S ribosomal subunits. This Helicobacter pylori (strain ATCC 700392 / 26695) (Campylobacter pylori) protein is Ribosome maturation factor RimP.